The sequence spans 495 residues: Probable cytosol aminopeptidase (495 aa).

Mn(2+) is bound by residues K267 and D272. K279 is an active-site residue. Mn(2+)-binding residues include D290, D349, and E351. The active site involves R353.

The protein belongs to the peptidase M17 family. The cofactor is Mn(2+).

Its subcellular location is the cytoplasm. It carries out the reaction Release of an N-terminal amino acid, Xaa-|-Yaa-, in which Xaa is preferably Leu, but may be other amino acids including Pro although not Arg or Lys, and Yaa may be Pro. Amino acid amides and methyl esters are also readily hydrolyzed, but rates on arylamides are exceedingly low.. The enzyme catalyses Release of an N-terminal amino acid, preferentially leucine, but not glutamic or aspartic acids.. Its function is as follows. Presumably involved in the processing and regular turnover of intracellular proteins. Catalyzes the removal of unsubstituted N-terminal amino acids from various peptides. This chain is Probable cytosol aminopeptidase, found in Histophilus somni (strain 129Pt) (Haemophilus somnus).